The sequence spans 338 residues: Ornithine carbamoyltransferase (338 aa).

Carbamoyl phosphate-binding positions include 56–59 (STRT), R107, and 134–137 (HPTQ). Residues N168, D232, and 236-237 (SM) contribute to the L-ornithine site. Carbamoyl phosphate contacts are provided by residues 274–275 (CL) and R320.

This sequence belongs to the aspartate/ornithine carbamoyltransferase superfamily. OTCase family.

The protein localises to the cytoplasm. The catalysed reaction is carbamoyl phosphate + L-ornithine = L-citrulline + phosphate + H(+). The protein operates within amino-acid degradation; L-arginine degradation via ADI pathway; carbamoyl phosphate from L-arginine: step 2/2. Its function is as follows. Reversibly catalyzes the transfer of the carbamoyl group from carbamoyl phosphate (CP) to the N(epsilon) atom of ornithine (ORN) to produce L-citrulline. This is Ornithine carbamoyltransferase from Buchnera aphidicola subsp. Acyrthosiphon pisum (strain 5A).